The primary structure comprises 84 residues: Delta-stichotoxin-Shd3a (84 aa).

A signal peptide spans 1-19; that stretch reads MAYLKIVLVALMLVLGVSA. A propeptide spanning residues 20–33 is cleaved from the precursor; it reads MRLSDQEDQDVSVV. 3 disulfide bridges follow: Cys38–Cys78, Cys40–Cys68, and Cys61–Cys79. A Lysine amide modification is found at Lys83.

This sequence belongs to the sea anemone sodium channel inhibitory toxin family. Type II subfamily.

Its subcellular location is the secreted. It localises to the nematocyst. Its function is as follows. Binds specifically to voltage-gated sodium channels (Nav), thereby delaying their inactivation during signal transduction. This is Delta-stichotoxin-Shd3a from Stichodactyla haddoni (Saddle carpet anemone).